A 534-amino-acid chain; its full sequence is Bifunctional purine biosynthesis protein PurH (534 aa).

Residues 6 to 151 enclose the MGS-like domain; that stretch reads TRLPVRRALI…KNHKDVAIVV (146 aa).

Belongs to the PurH family.

It catalyses the reaction (6R)-10-formyltetrahydrofolate + 5-amino-1-(5-phospho-beta-D-ribosyl)imidazole-4-carboxamide = 5-formamido-1-(5-phospho-D-ribosyl)imidazole-4-carboxamide + (6S)-5,6,7,8-tetrahydrofolate. The enzyme catalyses IMP + H2O = 5-formamido-1-(5-phospho-D-ribosyl)imidazole-4-carboxamide. It participates in purine metabolism; IMP biosynthesis via de novo pathway; 5-formamido-1-(5-phospho-D-ribosyl)imidazole-4-carboxamide from 5-amino-1-(5-phospho-D-ribosyl)imidazole-4-carboxamide (10-formyl THF route): step 1/1. Its pathway is purine metabolism; IMP biosynthesis via de novo pathway; IMP from 5-formamido-1-(5-phospho-D-ribosyl)imidazole-4-carboxamide: step 1/1. The chain is Bifunctional purine biosynthesis protein PurH from Stutzerimonas stutzeri (strain A1501) (Pseudomonas stutzeri).